We begin with the raw amino-acid sequence, 345 residues long: RDS/peripherin-like protein xRDS36 (345 aa).

Residues 1-24 (MVLFKAKFSFQRRVKLAQTLWLLS) lie on the Cytoplasmic side of the membrane. A helical transmembrane segment spans residues 25–43 (WLSVLVGCLTFGMGIFLKV). The Lumenal portion of the chain corresponds to 44–61 (QLWIHNEVMDNTTAHAVP). N-linked (GlcNAc...) asparagine glycosylation is present at Asn-54. A helical transmembrane segment spans residues 62–80 (NTVITAGLVGILLGYFAGK). Residues 81–99 (ISQASMDLTKYQRWKSFMM) lie on the Cytoplasmic side of the membrane. Residues 100 to 123 (PFFFLAILSCIVCLAALVLSVALR) traverse the membrane as a helical segment. The Lumenal segment spans residues 124–264 (GTLEESLKIG…LGYYTGIMAT (141 aa)). The N-linked (GlcNAc...) asparagine glycan is linked to Asn-229. A helical membrane pass occupies residues 265–290 (NGAAVTLSFLLQASVLVSLRYVQTSM). Residues 291-345 (DKIRDPDDVEADTEGFLLEKGVMETVNSSLEKIKDLFKSNQVETAEGGGEGAAGS) lie on the Cytoplasmic side of the membrane.

It belongs to the PRPH2/ROM1 family. As to quaternary structure, homodimer; disulfide-linked. Rod specific.

It localises to the membrane. In Xenopus laevis (African clawed frog), this protein is RDS/peripherin-like protein xRDS36 (rds36).